Consider the following 86-residue polypeptide: Small ribosomal subunit protein uS17 (86 aa).

The protein belongs to the universal ribosomal protein uS17 family. In terms of assembly, part of the 30S ribosomal subunit.

Functionally, one of the primary rRNA binding proteins, it binds specifically to the 5'-end of 16S ribosomal RNA. This is Small ribosomal subunit protein uS17 from Streptococcus equi subsp. equi (strain 4047).